The following is a 565-amino-acid chain: Heme/hemopexin transporter protein HuxB (565 aa).

Positions 1–26 (MKMRPRYSVIASAVSLGFVLSKSVMA) are cleaved as a signal peptide. The POTRA domain maps to 73–150 (FPLTQVQILD…GTVKILLLKG (78 aa)).

It belongs to the TPS (TC 1.B.20) family.

The protein localises to the cell outer membrane. Likely functions in the release of soluble HxuA from the cell. In terms of biological role, probable member of a two partner secretion pathway (TPS) in which it mediates the secretion of HuxA. This Haemophilus influenzae (strain 86-028NP) protein is Heme/hemopexin transporter protein HuxB (hxuB).